Reading from the N-terminus, the 50-residue chain is Temporin-SHb (50 aa).

Residues Phe1–Cys10 form the signal peptide. A propeptide spanning residues Glu11 to Arg35 is cleaved from the precursor. The interval Gln12 to Glu31 is disordered. Acidic residues predominate over residues Arg14 to Val30. Leu48 bears the Leucine amide mark.

This sequence belongs to the frog skin active peptide (FSAP) family. Temporin subfamily. In terms of tissue distribution, expressed by the skin glands.

It is found in the secreted. Its function is as follows. Amphipathic alpha-helical peptide with no antimicrobial activity. Does not display anti-leishmania activity. Does not show hemolytic activity (LC(50)&gt;116 uM). The chain is Temporin-SHb from Pelophylax saharicus (Sahara frog).